The primary structure comprises 313 residues: Aspartate carbamoyltransferase catalytic subunit (313 aa).

Carbamoyl phosphate is bound by residues Arg58 and Thr59. Lys86 is an L-aspartate binding site. Residues Arg108, His136, and Gln139 each coordinate carbamoyl phosphate. Arg169 and Arg223 together coordinate L-aspartate. Carbamoyl phosphate-binding residues include Gly264 and Pro265.

The protein belongs to the aspartate/ornithine carbamoyltransferase superfamily. ATCase family. In terms of assembly, heterododecamer (2C3:3R2) of six catalytic PyrB chains organized as two trimers (C3), and six regulatory PyrI chains organized as three dimers (R2).

The enzyme catalyses carbamoyl phosphate + L-aspartate = N-carbamoyl-L-aspartate + phosphate + H(+). Its pathway is pyrimidine metabolism; UMP biosynthesis via de novo pathway; (S)-dihydroorotate from bicarbonate: step 2/3. Catalyzes the condensation of carbamoyl phosphate and aspartate to form carbamoyl aspartate and inorganic phosphate, the committed step in the de novo pyrimidine nucleotide biosynthesis pathway. The sequence is that of Aspartate carbamoyltransferase catalytic subunit from Ruminiclostridium cellulolyticum (strain ATCC 35319 / DSM 5812 / JCM 6584 / H10) (Clostridium cellulolyticum).